A 147-amino-acid chain; its full sequence is D-aminoacyl-tRNA deacylase (147 aa).

Positions 136 to 137 (GP) match the Gly-cisPro motif, important for rejection of L-amino acids motif.

The protein belongs to the DTD family. In terms of assembly, homodimer.

The protein resides in the cytoplasm. It catalyses the reaction glycyl-tRNA(Ala) + H2O = tRNA(Ala) + glycine + H(+). The catalysed reaction is a D-aminoacyl-tRNA + H2O = a tRNA + a D-alpha-amino acid + H(+). Its function is as follows. An aminoacyl-tRNA editing enzyme that deacylates mischarged D-aminoacyl-tRNAs. Also deacylates mischarged glycyl-tRNA(Ala), protecting cells against glycine mischarging by AlaRS. Acts via tRNA-based rather than protein-based catalysis; rejects L-amino acids rather than detecting D-amino acids in the active site. By recycling D-aminoacyl-tRNA to D-amino acids and free tRNA molecules, this enzyme counteracts the toxicity associated with the formation of D-aminoacyl-tRNA entities in vivo and helps enforce protein L-homochirality. This chain is D-aminoacyl-tRNA deacylase, found in Streptococcus pneumoniae serotype 4 (strain ATCC BAA-334 / TIGR4).